The sequence spans 839 residues: DNA-directed RNA polymerase YonO (839 aa).

Mg(2+)-binding residues include Asp535, Asp537, and Asp539.

This sequence belongs to the YRH RNA polymerase family. Requires a divalent metal cation as cofactor.

It carries out the reaction RNA(n) + a ribonucleoside 5'-triphosphate = RNA(n+1) + diphosphate. A single subunit DNA-dependent RNA polymerase (RNAP) that catalyzes the transcription of DNA into RNA using the four ribonucleoside triphosphates (rNTPs) as substrates. The enzyme is more highly processive than the multisubunit RNAP from E.coli but is considerably more error-prone. It has no detectable proof-reading function but can perform pyrophosphorolysis. Probably transcribes the late genes of the SPbeta phage starting from yonK. This chain is DNA-directed RNA polymerase YonO (yonO), found in Bacillus pumilus (Bacillus mesentericus).